The primary structure comprises 595 residues: Elongation factor 4 (595 aa).

A tr-type G domain is found at 2–184; sequence SHIRNFSIIA…RLVATIPAPT (183 aa). GTP is bound by residues 14–19 and 131–134; these read DHGKST and NKMD.

Belongs to the TRAFAC class translation factor GTPase superfamily. Classic translation factor GTPase family. LepA subfamily.

Its subcellular location is the cell inner membrane. The enzyme catalyses GTP + H2O = GDP + phosphate + H(+). Its function is as follows. Required for accurate and efficient protein synthesis under certain stress conditions. May act as a fidelity factor of the translation reaction, by catalyzing a one-codon backward translocation of tRNAs on improperly translocated ribosomes. Back-translocation proceeds from a post-translocation (POST) complex to a pre-translocation (PRE) complex, thus giving elongation factor G a second chance to translocate the tRNAs correctly. Binds to ribosomes in a GTP-dependent manner. This chain is Elongation factor 4, found in Pseudomonas savastanoi pv. phaseolicola (strain 1448A / Race 6) (Pseudomonas syringae pv. phaseolicola (strain 1448A / Race 6)).